The sequence spans 248 residues: PF03932 family protein CutC (248 aa).

It belongs to the CutC family.

It is found in the cytoplasm. The sequence is that of PF03932 family protein CutC from Porphyromonas gingivalis (strain ATCC 33277 / DSM 20709 / CIP 103683 / JCM 12257 / NCTC 11834 / 2561).